Consider the following 95-residue polypeptide: Aspartyl/glutamyl-tRNA(Asn/Gln) amidotransferase subunit C (95 aa).

This sequence belongs to the GatC family. In terms of assembly, heterotrimer of A, B and C subunits.

It carries out the reaction L-glutamyl-tRNA(Gln) + L-glutamine + ATP + H2O = L-glutaminyl-tRNA(Gln) + L-glutamate + ADP + phosphate + H(+). The enzyme catalyses L-aspartyl-tRNA(Asn) + L-glutamine + ATP + H2O = L-asparaginyl-tRNA(Asn) + L-glutamate + ADP + phosphate + 2 H(+). Functionally, allows the formation of correctly charged Asn-tRNA(Asn) or Gln-tRNA(Gln) through the transamidation of misacylated Asp-tRNA(Asn) or Glu-tRNA(Gln) in organisms which lack either or both of asparaginyl-tRNA or glutaminyl-tRNA synthetases. The reaction takes place in the presence of glutamine and ATP through an activated phospho-Asp-tRNA(Asn) or phospho-Glu-tRNA(Gln). The polypeptide is Aspartyl/glutamyl-tRNA(Asn/Gln) amidotransferase subunit C (Sinorhizobium fredii (strain NBRC 101917 / NGR234)).